A 399-amino-acid polypeptide reads, in one-letter code: 1-deoxy-D-xylulose 5-phosphate reductoisomerase (399 aa).

Residues Thr-10, Gly-11, Ser-12, Ile-13, and Asn-124 each contribute to the NADPH site. Lys-125 contacts 1-deoxy-D-xylulose 5-phosphate. Glu-126 serves as a coordination point for NADPH. Asp-150 contacts Mn(2+). The 1-deoxy-D-xylulose 5-phosphate site is built by Ser-151, Glu-152, Ser-186, and His-209. Residue Glu-152 participates in Mn(2+) binding. Gly-215 serves as a coordination point for NADPH. 1-deoxy-D-xylulose 5-phosphate-binding residues include Ser-222, Asn-227, Lys-228, and Glu-231. Residue Glu-231 coordinates Mn(2+).

It belongs to the DXR family. Mg(2+) is required as a cofactor. Mn(2+) serves as cofactor.

It carries out the reaction 2-C-methyl-D-erythritol 4-phosphate + NADP(+) = 1-deoxy-D-xylulose 5-phosphate + NADPH + H(+). Its pathway is isoprenoid biosynthesis; isopentenyl diphosphate biosynthesis via DXP pathway; isopentenyl diphosphate from 1-deoxy-D-xylulose 5-phosphate: step 1/6. Its function is as follows. Catalyzes the NADPH-dependent rearrangement and reduction of 1-deoxy-D-xylulose-5-phosphate (DXP) to 2-C-methyl-D-erythritol 4-phosphate (MEP). This Psychromonas ingrahamii (strain DSM 17664 / CCUG 51855 / 37) protein is 1-deoxy-D-xylulose 5-phosphate reductoisomerase.